The primary structure comprises 43 residues: uncharacterized protein (43 aa).

Residues 1 to 16 (MKLLNFILIIFNALKS) form the signal peptide. Asn-37 is a glycosylation site (N-linked (GlcNAc...) asparagine; by host).

This is an uncharacterized protein from Acheta domesticus (House cricket).